Consider the following 233-residue polypeptide: Orotidine 5'-phosphate decarboxylase (233 aa).

Residues Asp-9, Lys-31, Asp-58 to Thr-67, Thr-120, Arg-182, Gln-191, Gly-211, and Arg-212 each bind substrate. The active-site Proton donor is the Lys-60.

The protein belongs to the OMP decarboxylase family. Type 1 subfamily. In terms of assembly, homodimer.

It carries out the reaction orotidine 5'-phosphate + H(+) = UMP + CO2. The protein operates within pyrimidine metabolism; UMP biosynthesis via de novo pathway; UMP from orotate: step 2/2. Catalyzes the decarboxylation of orotidine 5'-monophosphate (OMP) to uridine 5'-monophosphate (UMP). The protein is Orotidine 5'-phosphate decarboxylase of Listeria monocytogenes serotype 4b (strain CLIP80459).